A 344-amino-acid polypeptide reads, in one-letter code: Methionine import ATP-binding protein MetN 1 (344 aa).

The 240-residue stretch at 2 to 241 (IEIRNLSQRF…PHHEVTRALI (240 aa)) folds into the ABC transporter domain. 38-45 (GRSGAGKS) is an ATP binding site.

Belongs to the ABC transporter superfamily. Methionine importer (TC 3.A.1.24) family. In terms of assembly, the complex is composed of two ATP-binding proteins (MetN), two transmembrane proteins (MetI) and a solute-binding protein (MetQ).

Its subcellular location is the cell inner membrane. It catalyses the reaction L-methionine(out) + ATP + H2O = L-methionine(in) + ADP + phosphate + H(+). The catalysed reaction is D-methionine(out) + ATP + H2O = D-methionine(in) + ADP + phosphate + H(+). Part of the ABC transporter complex MetNIQ involved in methionine import. Responsible for energy coupling to the transport system. The polypeptide is Methionine import ATP-binding protein MetN 1 (Burkholderia mallei (strain ATCC 23344)).